A 322-amino-acid polypeptide reads, in one-letter code: MSKKIGILTSGGDAPGMNSAISFLAKSALSLGFEPYLIFDGYSGIIARKILPAKNFPYNGISSFGGTAIGSSRFPEFKKEEVQNKAVEILSEIGISSLVVVGGDGTYNGGYKLHLKGIKVIALPGTIDNDIQFTDYTIGFDTALNTIVETIDKLRDTANSHRRCFVVEVMGRHCQDLALYSAIATGSEILITNTNILTPEEVSQRVLEQFAKGKPSVIVTITENILPNLKEFAAKIEELTKISTRSLEVGHTQRGGRPSAFDRILAAKMAMKAMELINQDKSGLAISYLDGKIQTFDIAKVVSKPVRKTNDLVLEINKINQN.

ATP contacts are provided by residues Gly12, 73–74, and 103–106; these read RF and GDGT. Asp104 is a binding site for Mg(2+). A substrate-binding site is contributed by 126 to 128; that stretch reads TID. The active-site Proton acceptor is the Asp128. Arg155 is an ADP binding site. Substrate contacts are provided by residues Arg163 and 170 to 172; that span reads MGR. Residues 186 to 188, Lys212, and 214 to 216 contribute to the ADP site; these read GSE and KPS. Substrate contacts are provided by residues Glu223, Arg245, and 251-254; that span reads HTQR.

This sequence belongs to the phosphofructokinase type A (PFKA) family. ATP-dependent PFK group I subfamily. Prokaryotic clade 'B1' sub-subfamily. As to quaternary structure, homotetramer. Mg(2+) is required as a cofactor.

It is found in the cytoplasm. The catalysed reaction is beta-D-fructose 6-phosphate + ATP = beta-D-fructose 1,6-bisphosphate + ADP + H(+). The protein operates within carbohydrate degradation; glycolysis; D-glyceraldehyde 3-phosphate and glycerone phosphate from D-glucose: step 3/4. With respect to regulation, allosterically activated by ADP and other diphosphonucleosides, and allosterically inhibited by phosphoenolpyruvate. In terms of biological role, catalyzes the phosphorylation of D-fructose 6-phosphate to fructose 1,6-bisphosphate by ATP, the first committing step of glycolysis. The polypeptide is ATP-dependent 6-phosphofructokinase (Mesomycoplasma hyopneumoniae (strain 232) (Mycoplasma hyopneumoniae)).